Here is a 455-residue protein sequence, read N- to C-terminus: tRNA modification GTPase MnmE (455 aa).

Arginine 23, glutamate 85, and arginine 124 together coordinate (6S)-5-formyl-5,6,7,8-tetrahydrofolate. A TrmE-type G domain is found at glycine 220 to isoleucine 375. Asparagine 230 provides a ligand contact to K(+). GTP contacts are provided by residues asparagine 230–serine 235, threonine 249–threonine 255, and aspartate 274–glycine 277. Serine 234 is a Mg(2+) binding site. The K(+) site is built by threonine 249, valine 251, and threonine 254. Mg(2+) is bound at residue threonine 255. Lysine 455 lines the (6S)-5-formyl-5,6,7,8-tetrahydrofolate pocket.

It belongs to the TRAFAC class TrmE-Era-EngA-EngB-Septin-like GTPase superfamily. TrmE GTPase family. Homodimer. Heterotetramer of two MnmE and two MnmG subunits. The cofactor is K(+).

The protein localises to the cytoplasm. Functionally, exhibits a very high intrinsic GTPase hydrolysis rate. Involved in the addition of a carboxymethylaminomethyl (cmnm) group at the wobble position (U34) of certain tRNAs, forming tRNA-cmnm(5)s(2)U34. The sequence is that of tRNA modification GTPase MnmE from Geotalea uraniireducens (strain Rf4) (Geobacter uraniireducens).